A 505-amino-acid chain; its full sequence is Lysine--tRNA ligase (505 aa).

Residues E415 and E422 each coordinate Mg(2+).

Belongs to the class-II aminoacyl-tRNA synthetase family. In terms of assembly, homodimer. The cofactor is Mg(2+).

Its subcellular location is the cytoplasm. The catalysed reaction is tRNA(Lys) + L-lysine + ATP = L-lysyl-tRNA(Lys) + AMP + diphosphate. The protein is Lysine--tRNA ligase (lysS) of Escherichia coli (strain K12).